The chain runs to 194 residues: Holliday junction branch migration complex subunit RuvA (194 aa).

The interval 1–64 (MIGRLRGVLT…DDSAALYGFL (64 aa)) is domain I. Positions 65 to 140 (SESERRLFRH…RAADFNNGIS (76 aa)) are domain II. The tract at residues 140–144 (STSGK) is flexible linker. The interval 145–194 (LNLDTVSEAALALQQLGYKPAEAARMARDAGTESDDVASVIKKALQAALR) is domain III.

The protein belongs to the RuvA family. Homotetramer. Forms an RuvA(8)-RuvB(12)-Holliday junction (HJ) complex. HJ DNA is sandwiched between 2 RuvA tetramers; dsDNA enters through RuvA and exits via RuvB. An RuvB hexamer assembles on each DNA strand where it exits the tetramer. Each RuvB hexamer is contacted by two RuvA subunits (via domain III) on 2 adjacent RuvB subunits; this complex drives branch migration. In the full resolvosome a probable DNA-RuvA(4)-RuvB(12)-RuvC(2) complex forms which resolves the HJ.

The protein resides in the cytoplasm. Its function is as follows. The RuvA-RuvB-RuvC complex processes Holliday junction (HJ) DNA during genetic recombination and DNA repair, while the RuvA-RuvB complex plays an important role in the rescue of blocked DNA replication forks via replication fork reversal (RFR). RuvA specifically binds to HJ cruciform DNA, conferring on it an open structure. The RuvB hexamer acts as an ATP-dependent pump, pulling dsDNA into and through the RuvAB complex. HJ branch migration allows RuvC to scan DNA until it finds its consensus sequence, where it cleaves and resolves the cruciform DNA. The chain is Holliday junction branch migration complex subunit RuvA from Xylella fastidiosa (strain 9a5c).